We begin with the raw amino-acid sequence, 386 residues long: MEKIEDQFASLHIVRRSSEPKEPTYLLGIDTSKTVQADKGGLVAVLCSNGSIRIYDKETLHLLREFGGSPGLLSGVSFANSCDSVYSASTDGTVKCWDARGASEKPVQLFKGYPSCSFISFDVNCKDHVICAGAEKVDEDALLVFWDARFTSQDLSTRDPLGAYSETHSDDITQVRFHPSNPNLVVSGSTDGLVNVFDLSADKEEDALVATCNSVSSVSCIGWCGKDYKQIYCMTHDEGFCWWDLNHLDTDEPITCLNIQDVREITDVKDGHLDYLIGGLYHEKMDRLFVIGGTNTGKIHLLSCTSAGLTHVTSLHGGHAATVRSFCWNVSEDSLLTGGEDAQLLLWKPGAMEKTFTKKDSLKIASSVQQRVRVHSSDSYKKRKQQ.

6 WD repeats span residues 21 to 65 (KEPT…LLRE), 68 to 107 (GSPG…EKPV), 112 to 156 (GYPS…QDLS), 167 to 207 (THSD…EEDA), 213 to 253 (NSVS…TDEP), and 318 to 357 (GHAA…KTFT).

The sequence is that of WD repeat-containing protein 89 (Wdr89) from Mus musculus (Mouse).